The following is a 526-amino-acid chain: Fluoride export protein 1 (526 aa).

Disordered regions lie at residues 1–73 and 90–149; these read MMTA…RRAS and ASNI…KQAG. The Cytoplasmic portion of the chain corresponds to 1–159; that stretch reads MMTAPSDTEG…VVAKRQKVSR (159 aa). Composition is skewed to basic and acidic residues over residues 21–36 and 103–123; these read SPDRNRQRNLVDDHNH and PITRLDTLERVRTRDRDYLRE. The chain crosses the membrane as a helical span at residues 160 to 180; sequence LATELYTISYLIFFSLLGTLA. At 181-194 the chain is on the extracellular side; the sequence is RLGLQALTSAYPQS. The helical transmembrane segment at 195–215 threads the bilayer; it reads PIIFPSIWPNFAGCVVMGFLA. Residues 216 to 260 are Cytoplasmic-facing; it reads EDRMLFRPDWGQQQPNPKKDDDDDEEAKDIDPAAAKKAHMALKKT. Residues 223 to 242 form a disordered region; sequence PDWGQQQPNPKKDDDDDEEA. Residues 261-281 form a helical membrane-spanning segment; it reads IPLYVGLATGFCGSFTSFSSF. At 282-310 the chain is on the extracellular side; that stretch reads IRDIYLALSNDLAAHGSSAAPVSRNGGYS. The chain crosses the membrane as a helical span at residues 311–331; it reads FMALLAVTITTISLSLSGLFA. At 332–361 the chain is on the cytoplasmic side; sequence GAHLAIAIATLFTRFDLGLPYTFVSRILDR. A helical membrane pass occupies residues 362–382; the sequence is LIVLLGFGCWLGAVLLSIWPP. The Extracellular portion of the chain corresponds to 383-398; that stretch reads DRHSAQPEKERWRGTA. The chain crosses the membrane as a helical span at residues 399–419; that stretch reads TFALVFAPLGCLTRFYASAHL. Topologically, residues 420–424 are cytoplasmic; it reads NGRLP. Residues 425 to 445 traverse the membrane as a helical segment; the sequence is SFPLGTFVVNMLGTAVLGMAW. The Extracellular portion of the chain corresponds to 446–452; sequence DLNHVPS. Residues 453–473 form a helical membrane-spanning segment; it reads LGGVVGCQVLQGVADGFCGCL. Topologically, residues 474-492 are cytoplasmic; it reads TTVSTWVSELAALRRRHAY. The helical transmembrane segment at 493-513 threads the bilayer; it reads VYGGASVGGGLALMVVVMGSL. Residues 514 to 526 lie on the Extracellular side of the membrane; sequence RWTEGFGEVKCIS.

This sequence belongs to the fluoride channel Fluc/FEX (TC 1.A.43) family.

It localises to the cell membrane. The enzyme catalyses fluoride(in) = fluoride(out). Fluoride channel required for the rapid expulsion of cytoplasmic fluoride. This chain is Fluoride export protein 1, found in Neurospora crassa (strain ATCC 24698 / 74-OR23-1A / CBS 708.71 / DSM 1257 / FGSC 987).